We begin with the raw amino-acid sequence, 92 residues long: Putative lambdoid prophage defective integrase (92 aa).

This sequence belongs to the 'phage' integrase family.

The protein is Putative lambdoid prophage defective integrase (intG) of Escherichia coli O157:H7.